The sequence spans 154 residues: Fimbrial protein (154 aa).

The propeptide at 1-6 (MKAQKG) is leader sequence. Phe7 is modified (N-methylphenylalanine). The helical transmembrane segment at 7–27 (FTLIELMIVVAIIGILAAIAI) threads the bilayer. The cysteines at positions 133 and 151 are disulfide-linked. An O-linked (FucNAc...) serine glycan is attached at Ser154.

This sequence belongs to the N-Me-Phe pilin family. The pili are polar flexible filaments of about 5.4 nanometers diameter and 2.5 micrometers average length; they consist of only a single polypeptide chain arranged in a helical configuration of five subunits per turn in the assembled pilus. O-glycosylated; glycan consists of 5NbetaOHC47NFmPse(alpha2-4)Xyl(beta1-3)FucNAc in beta1-O linkage to Ser.

Its subcellular location is the fimbrium. It is found in the membrane. This Pseudomonas aeruginosa protein is Fimbrial protein (pilA).